The chain runs to 178 residues: uncharacterized protein (178 aa).

The signal sequence occupies residues 1 to 19; it reads MKKNIHILGASGVGTSTLG.

This is an uncharacterized protein from Bacillus subtilis (strain 168).